Reading from the N-terminus, the 248-residue chain is Pyridoxine 5'-phosphate synthase (248 aa).

Residue Asn-10 participates in 3-amino-2-oxopropyl phosphate binding. 12–13 contacts 1-deoxy-D-xylulose 5-phosphate; the sequence is DH. A 3-amino-2-oxopropyl phosphate-binding site is contributed by Arg-21. The active-site Proton acceptor is the His-46. 2 residues coordinate 1-deoxy-D-xylulose 5-phosphate: Arg-48 and His-53. The active-site Proton acceptor is the Glu-73. Thr-103 lines the 1-deoxy-D-xylulose 5-phosphate pocket. His-194 serves as the catalytic Proton donor. Residues Gly-195 and 216–217 each bind 3-amino-2-oxopropyl phosphate; that span reads GH.

It belongs to the PNP synthase family. In terms of assembly, homooctamer; tetramer of dimers.

Its subcellular location is the cytoplasm. It carries out the reaction 3-amino-2-oxopropyl phosphate + 1-deoxy-D-xylulose 5-phosphate = pyridoxine 5'-phosphate + phosphate + 2 H2O + H(+). It functions in the pathway cofactor biosynthesis; pyridoxine 5'-phosphate biosynthesis; pyridoxine 5'-phosphate from D-erythrose 4-phosphate: step 5/5. In terms of biological role, catalyzes the complicated ring closure reaction between the two acyclic compounds 1-deoxy-D-xylulose-5-phosphate (DXP) and 3-amino-2-oxopropyl phosphate (1-amino-acetone-3-phosphate or AAP) to form pyridoxine 5'-phosphate (PNP) and inorganic phosphate. In Legionella pneumophila (strain Paris), this protein is Pyridoxine 5'-phosphate synthase.